Consider the following 466-residue polypeptide: Asparagine--tRNA ligase (466 aa).

This sequence belongs to the class-II aminoacyl-tRNA synthetase family. In terms of assembly, homodimer.

It is found in the cytoplasm. It carries out the reaction tRNA(Asn) + L-asparagine + ATP = L-asparaginyl-tRNA(Asn) + AMP + diphosphate + H(+). The chain is Asparagine--tRNA ligase from Shewanella loihica (strain ATCC BAA-1088 / PV-4).